The chain runs to 209 residues: A-type ATP synthase subunit D (209 aa).

It belongs to the V-ATPase D subunit family. As to quaternary structure, has multiple subunits with at least A(3), B(3), C, D, E, F, H, I and proteolipid K(x).

The protein resides in the cell membrane. Functionally, component of the A-type ATP synthase that produces ATP from ADP in the presence of a proton gradient across the membrane. This chain is A-type ATP synthase subunit D, found in Methanoregula boonei (strain DSM 21154 / JCM 14090 / 6A8).